The following is a 741-amino-acid chain: T-box transcription factor TBX3 (741 aa).

Positions 107-220 (LEAKELWDQF…NNISDKHGFT (114 aa)) form a DNA-binding region, T-box; first part. The segment at residues 241–305 (ILNSMHKYQP…NNPFAKGFRD (65 aa)) is a DNA-binding region (T-box; second part). Serine 369 is subject to Phosphoserine. The interval 369 to 469 (SEAESDAEAE…EGPVATKVDE (101 aa)) is disordered. Composition is skewed to basic and acidic residues over residues 377–386 (AESKEEHGPE) and 420–437 (SRARDTARLDKASPDSRH). Phosphoserine occurs at positions 432, 438, 456, 705, 736, 738, and 740. Residues 438-447 (SPATISSSTR) show a composition bias toward polar residues.

Interacts with PML. As to expression, in adults, highest levels in lung. Also found in brain, heart, kidney, liver and ovary.

Its subcellular location is the nucleus. Functionally, transcriptional repressor involved in developmental processes. Binds to the palindromic T site 5'-TTCACACCTAGGTGTGAA-3' DNA sequence, or a half-site, which are present in the regulatory region of several genes. Probably plays a role in limb pattern formation. Required for mammary placode induction, and maintenance of the mammary buds during development. Involved in branching morphogenesis in both developing lungs and adult mammary glands, via negative modulation of target genes; acting redundantly with TBX2. Required, together with TBX2, to maintain cell proliferation in the embryonic lung mesenchyme; perhaps acting downstream of SHH, BMP and TGFbeta signaling. Involved in modulating early inner ear development, acting independently of, and also redundantly with, TBX2 in different subregions of the developing ear. Acts as a negative regulator of PML function in cellular senescence. The polypeptide is T-box transcription factor TBX3 (Tbx3) (Mus musculus (Mouse)).